The sequence spans 209 residues: Thymidine kinase (209 aa).

ATP contacts are provided by residues 9-16 and 88-91; these read AAMNAGKS and DEAQ. Residue Glu-89 is the Proton acceptor of the active site. Zn(2+) contacts are provided by Cys-146, Cys-148, Cys-183, and His-186.

Belongs to the thymidine kinase family. In terms of assembly, homotetramer.

The protein localises to the cytoplasm. The catalysed reaction is thymidine + ATP = dTMP + ADP + H(+). The polypeptide is Thymidine kinase (Legionella pneumophila subsp. pneumophila (strain Philadelphia 1 / ATCC 33152 / DSM 7513)).